We begin with the raw amino-acid sequence, 1515 residues long: Neurite extension and migration factor (1515 aa).

A compositionally biased stretch (basic and acidic residues) spans 381–405 (DKKKGKEEVHEDKSIETKDEKDNGE). Disordered regions lie at residues 381 to 415 (DKKKGKEEVHEDKSIETKDEKDNGEKPALNNKPCG), 505 to 529 (VNERKEWPPGGSKEEDDDEWCPKKR), 731 to 774 (KKIK…HMSE), 1158 to 1225 (FDEP…TKKG), 1372 to 1422 (TPQE…EDSR), and 1435 to 1479 (TLGN…AGTT). Polar residues-rich tracts occupy residues 746-757 (SPVSEDTSSKAN) and 763-772 (TPGTSNSSHM). Low complexity predominate over residues 1180 to 1193 (PGKSGAVSQSSSQK). Over residues 1442–1452 (THKKLYRHKSS) the composition is skewed to basic residues. Residues 1455 to 1479 (GLRDEKYKGKRVEREQAHKDEAGTT) are compositionally biased toward basic and acidic residues.

As to expression, expressed in the brain, particularly during the late embryonic and perinatal stages of development. In the developing brain, it is expressed only in the cortical plate and subplate region but not in the intermediate or ventricular zone.

It is found in the nucleus. The protein resides in the cytoplasm. Its function is as follows. Involved in neurite outgrowth by regulating cell-cell adhesion via the N-cadherin signaling pathway. May act by regulating expression of protein-coding genes, such as N-cadherins and integrin beta-1 (ITGB1). In Mus musculus (Mouse), this protein is Neurite extension and migration factor.